A 145-amino-acid chain; its full sequence is D-aminoacyl-tRNA deacylase (145 aa).

A Gly-cisPro motif, important for rejection of L-amino acids motif is present at residues 137–138; sequence GP.

This sequence belongs to the DTD family. In terms of assembly, homodimer.

Its subcellular location is the cytoplasm. The enzyme catalyses glycyl-tRNA(Ala) + H2O = tRNA(Ala) + glycine + H(+). It catalyses the reaction a D-aminoacyl-tRNA + H2O = a tRNA + a D-alpha-amino acid + H(+). Its function is as follows. An aminoacyl-tRNA editing enzyme that deacylates mischarged D-aminoacyl-tRNAs. Also deacylates mischarged glycyl-tRNA(Ala), protecting cells against glycine mischarging by AlaRS. Acts via tRNA-based rather than protein-based catalysis; rejects L-amino acids rather than detecting D-amino acids in the active site. By recycling D-aminoacyl-tRNA to D-amino acids and free tRNA molecules, this enzyme counteracts the toxicity associated with the formation of D-aminoacyl-tRNA entities in vivo and helps enforce protein L-homochirality. This chain is D-aminoacyl-tRNA deacylase, found in Yersinia pestis bv. Antiqua (strain Antiqua).